The sequence spans 374 residues: Anhydro-N-acetylmuramic acid kinase (374 aa).

15-22 (GTSADGID) contacts ATP.

The protein belongs to the anhydro-N-acetylmuramic acid kinase family.

It carries out the reaction 1,6-anhydro-N-acetyl-beta-muramate + ATP + H2O = N-acetyl-D-muramate 6-phosphate + ADP + H(+). It participates in amino-sugar metabolism; 1,6-anhydro-N-acetylmuramate degradation. Its pathway is cell wall biogenesis; peptidoglycan recycling. Functionally, catalyzes the specific phosphorylation of 1,6-anhydro-N-acetylmuramic acid (anhMurNAc) with the simultaneous cleavage of the 1,6-anhydro ring, generating MurNAc-6-P. Is required for the utilization of anhMurNAc either imported from the medium or derived from its own cell wall murein, and thus plays a role in cell wall recycling. The protein is Anhydro-N-acetylmuramic acid kinase of Xanthomonas axonopodis pv. citri (strain 306).